Reading from the N-terminus, the 583-residue chain is uncharacterized protein (583 aa).

24–140 provides a ligand contact to a nucleoside 3',5'-cyclic phosphate; it reads ILADIDDEQL…SAMLRAMARM (117 aa). In terms of domain architecture, PNPLA spans 309 to 469; it reads LVMAGGGARG…LNNLPANVMC (161 aa). The GXGXXG signature appears at 313–318; the sequence is GGGARG. The short motif at 340–344 is the GXSXG element; sequence GTSSG. Ser-342 (nucleophile) is an active-site residue. The active-site Proton acceptor is Asp-456. A DGA/G motif is present at residues 456–458; sequence DGG.

The protein belongs to the NTE family.

This is an uncharacterized protein from Mycobacterium tuberculosis (strain CDC 1551 / Oshkosh).